The primary structure comprises 359 residues: DNA polymerase IV (359 aa).

The 182-residue stretch at 4-185 (IIHIDMDCYF…LSLRKIPGVG (182 aa)) folds into the UmuC domain. Mg(2+) contacts are provided by Asp-8 and Asp-103. The active site involves Glu-104.

This sequence belongs to the DNA polymerase type-Y family. In terms of assembly, monomer. Requires Mg(2+) as cofactor.

It is found in the cytoplasm. The catalysed reaction is DNA(n) + a 2'-deoxyribonucleoside 5'-triphosphate = DNA(n+1) + diphosphate. Poorly processive, error-prone DNA polymerase involved in untargeted mutagenesis. Copies undamaged DNA at stalled replication forks, which arise in vivo from mismatched or misaligned primer ends. These misaligned primers can be extended by PolIV. Exhibits no 3'-5' exonuclease (proofreading) activity. May be involved in translesional synthesis, in conjunction with the beta clamp from PolIII. The protein is DNA polymerase IV of Shewanella sp. (strain MR-7).